The following is a 145-amino-acid chain: Ribosomal RNA large subunit methyltransferase H (145 aa).

S-adenosyl-L-methionine contacts are provided by residues Leu-68, Gly-95, and 113–118 (FSKMTF).

Belongs to the RNA methyltransferase RlmH family. Homodimer.

The protein resides in the cytoplasm. It carries out the reaction pseudouridine(1915) in 23S rRNA + S-adenosyl-L-methionine = N(3)-methylpseudouridine(1915) in 23S rRNA + S-adenosyl-L-homocysteine + H(+). Its function is as follows. Specifically methylates the pseudouridine at position 1915 (m3Psi1915) in 23S rRNA. This Mycoplasmopsis pulmonis (strain UAB CTIP) (Mycoplasma pulmonis) protein is Ribosomal RNA large subunit methyltransferase H.